The primary structure comprises 435 residues: GTPase Der (435 aa).

2 EngA-type G domains span residues 4-167 (PVVA…PEKD) and 175-350 (IRFS…DNHN). Residues 10-17 (GRPNVGKS), 57-61 (DTGGI), 119-122 (NKAD), 181-188 (GRPNVGKS), 228-232 (DTAGI), and 293-296 (NKWD) each bind GTP. Residues 351-435 (KRVQSATLND…PIHLIERARK (85 aa)) enclose the KH-like domain.

The protein belongs to the TRAFAC class TrmE-Era-EngA-EngB-Septin-like GTPase superfamily. EngA (Der) GTPase family. As to quaternary structure, associates with the 50S ribosomal subunit.

In terms of biological role, GTPase that plays an essential role in the late steps of ribosome biogenesis. This Levilactobacillus brevis (strain ATCC 367 / BCRC 12310 / CIP 105137 / JCM 1170 / LMG 11437 / NCIMB 947 / NCTC 947) (Lactobacillus brevis) protein is GTPase Der.